The chain runs to 268 residues: L-aspartate dehydrogenase (268 aa).

Positions 125 and 191 each coordinate NAD(+). His-221 is an active-site residue.

The protein belongs to the L-aspartate dehydrogenase family.

It catalyses the reaction L-aspartate + NADP(+) + H2O = oxaloacetate + NH4(+) + NADPH + H(+). The enzyme catalyses L-aspartate + NAD(+) + H2O = oxaloacetate + NH4(+) + NADH + H(+). Its pathway is cofactor biosynthesis; NAD(+) biosynthesis; iminoaspartate from L-aspartate (dehydrogenase route): step 1/1. Functionally, specifically catalyzes the NAD or NADP-dependent dehydrogenation of L-aspartate to iminoaspartate. The sequence is that of L-aspartate dehydrogenase from Ralstonia nicotianae (strain ATCC BAA-1114 / GMI1000) (Ralstonia solanacearum).